The sequence spans 932 residues: Protocadherin gamma-A3 (932 aa).

The N-terminal stretch at Met-1–Gly-29 is a signal peptide. 6 Cadherin domains span residues Gln-30–Phe-133, Pro-134–Phe-242, Thr-243–Ile-347, Thr-348–Phe-452, Pro-453–Ile-562, and Asp-570–Ala-682. Residues Gln-30 to Tyr-692 are Extracellular-facing. Residues Asn-265, Asn-419, and Asn-545 are each glycosylated (N-linked (GlcNAc...) asparagine). N-linked (GlcNAc...) asparagine glycosylation is present at Asn-685. Residues Leu-693–Ala-713 form a helical membrane-spanning segment. At His-714–Lys-932 the chain is on the cytoplasmic side. Disordered regions lie at residues Leu-806–Asn-841 and Ala-902–Lys-932. Residues Asn-922–Lys-932 show a composition bias toward basic residues.

Its subcellular location is the cell membrane. Its function is as follows. Potential calcium-dependent cell-adhesion protein. May be involved in the establishment and maintenance of specific neuronal connections in the brain. In Pan troglodytes (Chimpanzee), this protein is Protocadherin gamma-A3 (PCDHGA3).